Reading from the N-terminus, the 300-residue chain is MLLGSHVSMKGKEMLLGSAQQAAEFGANTFMIYTGAPQNTRRKPIEELNIPAAQALIAAKNLGPIVVHAPYIVNLGNTVKPENFKFAIEFLQQEVIRAEALGASQIVLHPGAHVGAGADAGIKQIIKGLNEILRPDQTAQIALETMAGKGTEVGRRFEEIAQMIDGVTLNDKLSVTFDTCHTSDAGYNIREDFDGVLNEFDHIIGLDRLKVIHLNDSKNPQGAHKDRHANIGFGEIGFDALHGVVTHPQLVDVPKIMETPYVGKDKKHNFAPYAYEIAMLKKGEFDPDLLTKIEQNEGRL.

Zn(2+) is bound by residues His68, His109, Glu144, Asp178, His181, His213, Asp226, His228, and Glu258.

The protein belongs to the AP endonuclease 2 family. The cofactor is Zn(2+).

It carries out the reaction Endonucleolytic cleavage to 5'-phosphooligonucleotide end-products.. Endonuclease IV plays a role in DNA repair. It cleaves phosphodiester bonds at apurinic or apyrimidinic (AP) sites, generating a 3'-hydroxyl group and a 5'-terminal sugar phosphate. This is Probable endonuclease 4 from Latilactobacillus sakei subsp. sakei (strain 23K) (Lactobacillus sakei subsp. sakei).